Consider the following 316-residue polypeptide: 4-hydroxyphenylacetate decarboxylase activating enzyme (316 aa).

The Radical SAM core domain maps to 20–307 (HDGPGCRTTV…QDIFLDNGIA (288 aa)). [4Fe-4S] cluster contacts are provided by Cys-34, Cys-38, Cys-41, Cys-60, Cys-66, Cys-69, and Cys-105. 40-42 (WCA) serves as a coordination point for S-adenosyl-L-methionine. In terms of domain architecture, 4Fe-4S ferredoxin-type spans 84–115 (NKPVIDWNICKDCESFECVNSCYYNAFKLCAK). S-adenosyl-L-methionine-binding positions include Gly-144, 193–195 (DIK), and His-267.

This sequence belongs to the organic radical-activating enzymes family. Monomer. The cofactor is [4Fe-4S] cluster.

The catalysed reaction is glycyl-[protein] + reduced [flavodoxin] + S-adenosyl-L-methionine = glycin-2-yl radical-[protein] + semiquinone [flavodoxin] + 5'-deoxyadenosine + L-methionine + H(+). Functionally, catalyzes activation of 4-hydroxyphenylacetate decarboxylase under anaerobic conditions by generation of an organic free radical on a glycine residue, via a homolytic cleavage of S-adenosyl-L-methionine (SAM). The chain is 4-hydroxyphenylacetate decarboxylase activating enzyme from Clostridioides difficile (Peptoclostridium difficile).